A 914-amino-acid chain; its full sequence is TRPM8 channel-associated factor 3 (914 aa).

One can recognise a Peptidase M60 domain in the interval 533 to 832 (NSWVSTGLYL…TYLQLQEGFG (300 aa)).

This sequence belongs to the TCAF family. As to expression, prostate-specific. Present in both dorso-lateral and anterior prostate.

In terms of biological role, may play a role in the regulation of the cation channel TRPM8 activity. The chain is TRPM8 channel-associated factor 3 from Mus musculus (Mouse).